Consider the following 469-residue polypeptide: NADH-quinone oxidoreductase subunit N (469 aa).

Helical transmembrane passes span 2–22, 28–48, 70–90, 101–121, 122–142, 157–177, 194–214, 233–253, 261–281, 290–310, 315–335, 361–381, 398–418, and 447–467; these read IALL…FLCV, RYSI…FFIV, FSFC…ISSF, EMFA…LSVE, LILT…MIAM, FLLS…VFGV, FLSI…IAIF, GFLA…LCFL, ILQG…NLLS, ILIA…SSVG, IYPA…LFAI, AFAF…VGFL, LAIF…KIII, and ILFI…LNLF.

This sequence belongs to the complex I subunit 2 family. NDH-1 is composed of 14 different subunits. Subunits NuoA, H, J, K, L, M, N constitute the membrane sector of the complex.

It is found in the cell inner membrane. It catalyses the reaction a quinone + NADH + 5 H(+)(in) = a quinol + NAD(+) + 4 H(+)(out). NDH-1 shuttles electrons from NADH, via FMN and iron-sulfur (Fe-S) centers, to quinones in the respiratory chain. The immediate electron acceptor for the enzyme in this species is believed to be ubiquinone. Couples the redox reaction to proton translocation (for every two electrons transferred, four hydrogen ions are translocated across the cytoplasmic membrane), and thus conserves the redox energy in a proton gradient. The protein is NADH-quinone oxidoreductase subunit N of Campylobacter fetus subsp. fetus (strain 82-40).